The following is a 345-amino-acid chain: Ryncolin-4 (345 aa).

Residues Met1–Gly19 form the signal peptide. Residues Ile48–Asn118 form a disordered region. One can recognise a Collagen-like domain in the interval Gly57–Gly114. Residues Asp86 to Asp116 show a composition bias toward basic and acidic residues. Residues Asp121–Lys339 enclose the Fibrinogen C-terminal domain. 2 cysteine pairs are disulfide-bonded: Cys130-Cys158 and Cys282-Cys295.

This sequence belongs to the ficolin lectin family. Veficolin subfamily. Hydroxylated, possibly at Pro-80. Expressed by the venom duct.

The protein localises to the secreted. Functionally, initiates complement activation and/or interferes in platelet aggregation and/or blood coagulation. In Cerberus rynchops (Dog-faced water snake), this protein is Ryncolin-4.